A 1124-amino-acid polypeptide reads, in one-letter code: SH3 and PX domain-containing protein 2A (1124 aa).

In terms of domain architecture, PX spans 4 to 128 (YCVQDATVVD…RFFEARPEDV (125 aa)). The SH3 1 domain maps to 166 to 225 (MILEQYVVVSNYKKQENSELSLQAGEVVDVIEKNESGWWFVSTSEEQGWVPATYLEAQNG). T256 bears the Phosphothreonine mark. The SH3 2 domain maps to 266 to 325 (SREEKYVTVQPYTSQSKDEIGFEKGVTVEVIRKNLEGWWYIRYLGKEGWAPASYLKKAKD). Phosphoserine occurs at positions 405 and 420. Disordered stretches follow at residues 414 to 443 (QRAQ…PKPP), 504 to 672 (RKKP…KLKA), 692 to 830 (SVTI…PKKE), and 886 to 952 (YLVA…GKTS). The SH3 3 domain occupies 447–506 (SVEVEYYTIAEFQSCISDGISFRGGQKAEVIDKNSGGWWYVQIGEKEGWAPASYIDKRKK). 2 positions are modified to phosphoserine: S546 and S566. A compositionally biased stretch (basic and acidic residues) spans 575–585 (SGDRGSGDKHP). The residue at position 592 (S592) is a Phosphoserine. Positions 607–619 (SSEDVALEEETIY) are enriched in acidic residues. Low complexity-rich tracts occupy residues 633–669 (SARG…SLLK) and 692–709 (SVTI…SSLS). S643 carries the phosphoserine modification. The segment covering 713 to 739 (GDLKPRSASDAGIRDTPKVGTKKDPDV) has biased composition (basic and acidic residues). T728 is subject to Phosphothreonine. S764, S766, and S812 each carry phosphoserine. T822 is subject to Phosphothreonine. Residues 833–892 (GQGATYVTCSAYQKVQDSEISFPEGAEVHVLEKAESGWWYVRFGELEGWAPSHYLVAEEN) form the SH3 4 domain. The stretch at 907 to 937 (SSQNEGKSDSLEKIEKRVQALNTVNQSKRAT) forms a coiled coil. Residues 912-924 (GKSDSLEKIEKRV) are compositionally biased toward basic and acidic residues. Positions 926–935 (ALNTVNQSKR) are enriched in polar residues. Phosphoserine is present on residues S993, S1007, S1008, and S1029. The tract at residues 1020–1050 (KGRLAERAASQGSESPLLPTQRKGIPVSPVR) is disordered. The 62-residue stretch at 1063–1124 (NLKDVYISIA…VPSNYLEKKN (62 aa)) folds into the SH3 5 domain.

This sequence belongs to the SH3PXD2 family. In terms of assembly, interacts with ADAM12, ADAM15 and ADAM19. Interacts with NOXO1. Interacts (via SH3 domains) with NOXA1; the interaction is direct. Interacts (via N-terminus) with CYBA. Interacts with FASLG. Interacts (via PX domain) with RAB40B (GTP-bound); interaction promotes invadopodia-mediated extracellular matrix degradation. In terms of processing, tyrosine phosphorylated by SRC. Phosphorylation plays a regulatory role in the protein localization. The intramolecular interaction of the PX domain with the third SH3 domain maintains the protein in the cytoplasm and phosphorylation disrupts this interaction, resulting in the redistribution of the protein from cytoplasm to the perimembrane region. Phosphorylated on serine upon DNA damage, probably by ATM or ATR. As to expression, widely expressed. Not found in the spleen and testis.

It localises to the cytoplasm. It is found in the cell projection. The protein resides in the podosome. Adapter protein involved in invadopodia and podosome formation, extracellular matrix degradation and invasiveness of some cancer cells. Binds matrix metalloproteinases (ADAMs), NADPH oxidases (NOXs) and phosphoinositides. Acts as an organizer protein that allows NOX1- or NOX3-dependent reactive oxygen species (ROS) generation and ROS localization. In association with ADAM12, mediates the neurotoxic effect of amyloid-beta peptide. The protein is SH3 and PX domain-containing protein 2A of Mus musculus (Mouse).